A 248-amino-acid polypeptide reads, in one-letter code: 3-deoxy-manno-octulosonate cytidylyltransferase (248 aa).

The protein belongs to the KdsB family.

It localises to the cytoplasm. The enzyme catalyses 3-deoxy-alpha-D-manno-oct-2-ulosonate + CTP = CMP-3-deoxy-beta-D-manno-octulosonate + diphosphate. It participates in nucleotide-sugar biosynthesis; CMP-3-deoxy-D-manno-octulosonate biosynthesis; CMP-3-deoxy-D-manno-octulosonate from 3-deoxy-D-manno-octulosonate and CTP: step 1/1. Its pathway is bacterial outer membrane biogenesis; lipopolysaccharide biosynthesis. Functionally, activates KDO (a required 8-carbon sugar) for incorporation into bacterial lipopolysaccharide in Gram-negative bacteria. The protein is 3-deoxy-manno-octulosonate cytidylyltransferase of Escherichia coli O127:H6 (strain E2348/69 / EPEC).